The following is a 98-amino-acid chain: MAVAYYCLSLFLLSTWVALLLQPLQGAWGAPLEPMYPGDYATHEQRAQYETQLRRYINTLTRPRYGKRDEDTAGLPGRQLPPCTSLLVGLMPCAAARS.

The signal sequence occupies residues 1–29 (MAVAYYCLSLFLLSTWVALLLQPLQGAWG). Position 65 is a tyrosine amide (Tyr65).

Belongs to the NPY family. In terms of processing, no icosapeptide-like peptide is cleaved from the C-terminal.

The protein localises to the secreted. Its function is as follows. Hormone secreted by pancreatic cells that acts as a regulator of pancreatic and gastrointestinal functions probably by signaling through the G protein-coupled receptor NPY4R2. This Rattus norvegicus (Rat) protein is Pancreatic polypeptide prohormone (Ppy).